We begin with the raw amino-acid sequence, 371 residues long: MSTNEAAASQEDIALAQGAVLVKSCQVPDGSIPIRGFDFSTASGPDFSLSAILSSYMSTGFQATHLAQAIQQVNQMLSLRDTPLTCDDDEKLFPYPEGRQKRSCTIFLGYTSNLVTSGLREVLRYCVQRNLVDCIVTSAGGIEEDLIKCLKPSYLGTFTMDGAKLRSNGMNRAGNVLIPNDNYCAFEDWLMPILDECLVEQEEKHLNWTPSKLIQRLGERIGDESSILYWAAKHRIPVFCPALTDGSLGDMLYFHSVKSSPGLRVDIVEDVRHINTIAVKSFKTGSIILGGGVVKHHINNANLMRNGADHTVYINTGQEFDGSDSGAQPDEAVSWGKVKPSAGAVKVHAEATLVFPLLVAETFAKHEGHKD.

Residues 112 to 116 (SNLVT), 138 to 140 (SAG), Glu-144, and Asp-245 each bind NAD(+). 143-144 (EE) is a spermidine binding site. Spermidine is bound at residue Asp-250. Position 291 (Gly-291) interacts with NAD(+). Spermidine is bound at residue His-296. 316–317 (TG) is an NAD(+) binding site. Residues 322–324 (GSD) and 331–337 (EAVSWGK) contribute to the spermidine site. Lys-337 serves as the catalytic Nucleophile. 350–351 (EA) lines the NAD(+) pocket.

This sequence belongs to the deoxyhypusine synthase family. NAD(+) serves as cofactor.

It catalyses the reaction [eIF5A protein]-L-lysine + spermidine = [eIF5A protein]-deoxyhypusine + propane-1,3-diamine. It participates in protein modification; eIF5A hypusination. Its function is as follows. Catalyzes the NAD-dependent oxidative cleavage of spermidine and the subsequent transfer of the butylamine moiety of spermidine to the epsilon-amino group of a critical lysine residue of the eIF-5A precursor protein to form the intermediate deoxyhypusine residue. This is the first step of the post-translational modification of that lysine into an unusual amino acid residue named hypusine. Hypusination is unique to mature eIF-5A factor and is essential for its function. This Caenorhabditis elegans protein is Deoxyhypusine synthase.